A 106-amino-acid chain; its full sequence is Trp operon repressor homolog (106 aa).

A DNA-binding region spans residues 59–82; that stretch reads QREIQQILNTSAATITRGSNMIKI.

This sequence belongs to the TrpR family. Homodimer.

Its subcellular location is the cytoplasm. In terms of biological role, this protein is an aporepressor. When complexed with L-tryptophan it binds the operator region of the trp operon and prevents the initiation of transcription. The protein is Trp operon repressor homolog of Histophilus somni (strain 129Pt) (Haemophilus somnus).